The sequence spans 178 residues: UPF0232 protein cgR_0005 (178 aa).

The tract at residues 16–55 (AMRRNGSVPDLNKNDAFRRPPAPKGGVEKRKKGRASGLDG) is disordered.

This sequence belongs to the UPF0232 family.

The chain is UPF0232 protein cgR_0005 from Corynebacterium glutamicum (strain R).